The chain runs to 267 residues: Cytochrome b (267 aa).

4 helical membrane passes run 4–24, 48–69, 84–104, and 149–169; these read FGSL…LLAA, WLIR…YLHI, WNTG…GYVL, and FFTL…IHLT. Heme b-binding residues include His-54 and His-68. The heme b site is built by His-153 and His-167. His-172 contacts a ubiquinone. 2 helical membrane-spanning segments follow: residues 197–217 and 259–267; these read LKDI…ALFA and LGGVLALAA.

It belongs to the cytochrome b family. As to quaternary structure, the cytochrome bc1 complex contains 11 subunits: 3 respiratory subunits (MT-CYB, CYC1 and UQCRFS1), 2 core proteins (UQCRC1 and UQCRC2) and 6 low-molecular weight proteins (UQCRH/QCR6, UQCRB/QCR7, UQCRQ/QCR8, UQCR10/QCR9, UQCR11/QCR10 and a cleavage product of UQCRFS1). This cytochrome bc1 complex then forms a dimer. It depends on heme b as a cofactor.

It localises to the mitochondrion inner membrane. Its function is as follows. Component of the ubiquinol-cytochrome c reductase complex (complex III or cytochrome b-c1 complex) that is part of the mitochondrial respiratory chain. The b-c1 complex mediates electron transfer from ubiquinol to cytochrome c. Contributes to the generation of a proton gradient across the mitochondrial membrane that is then used for ATP synthesis. In Raphus cucullatus (Dodo), this protein is Cytochrome b (MT-CYB).